A 429-amino-acid polypeptide reads, in one-letter code: Adenylosuccinate synthetase (429 aa).

Residues 12–18 (GDEGKGK) and 40–42 (GHT) each bind GTP. The Proton acceptor role is filled by Asp13. Mg(2+) contacts are provided by Asp13 and Gly40. Residues 13-16 (DEGK), 38-41 (NAGH), Thr128, Arg142, Gln223, Thr238, and Arg302 each bind IMP. His41 acts as the Proton donor in catalysis. Residue 298-304 (VNTGRKR) coordinates substrate. Residues Arg304, 330–332 (KLD), and 412–414 (GVG) contribute to the GTP site.

Belongs to the adenylosuccinate synthetase family. In terms of assembly, homodimer. Mg(2+) serves as cofactor.

The protein resides in the cytoplasm. The catalysed reaction is IMP + L-aspartate + GTP = N(6)-(1,2-dicarboxyethyl)-AMP + GDP + phosphate + 2 H(+). Its pathway is purine metabolism; AMP biosynthesis via de novo pathway; AMP from IMP: step 1/2. In terms of biological role, plays an important role in the de novo pathway of purine nucleotide biosynthesis. Catalyzes the first committed step in the biosynthesis of AMP from IMP. The protein is Adenylosuccinate synthetase of Corynebacterium efficiens (strain DSM 44549 / YS-314 / AJ 12310 / JCM 11189 / NBRC 100395).